A 371-amino-acid chain; its full sequence is Queuine tRNA-ribosyltransferase (371 aa).

Residue Asp89 is the Proton acceptor of the active site. Residues 89–93, Asp143, Gln185, and Gly212 contribute to the substrate site; that span reads DSGGF. Positions 243–249 are RNA binding; that stretch reads GVGKPED. The active-site Nucleophile is the Asp262. The interval 267 to 271 is RNA binding; important for wobble base 34 recognition; the sequence is TRNAR. Zn(2+) is bound by residues Cys300, Cys302, Cys305, and His331.

Belongs to the queuine tRNA-ribosyltransferase family. Homodimer. Within each dimer, one monomer is responsible for RNA recognition and catalysis, while the other monomer binds to the replacement base PreQ1. Requires Zn(2+) as cofactor.

The enzyme catalyses 7-aminomethyl-7-carbaguanine + guanosine(34) in tRNA = 7-aminomethyl-7-carbaguanosine(34) in tRNA + guanine. It functions in the pathway tRNA modification; tRNA-queuosine biosynthesis. Catalyzes the base-exchange of a guanine (G) residue with the queuine precursor 7-aminomethyl-7-deazaguanine (PreQ1) at position 34 (anticodon wobble position) in tRNAs with GU(N) anticodons (tRNA-Asp, -Asn, -His and -Tyr). Catalysis occurs through a double-displacement mechanism. The nucleophile active site attacks the C1' of nucleotide 34 to detach the guanine base from the RNA, forming a covalent enzyme-RNA intermediate. The proton acceptor active site deprotonates the incoming PreQ1, allowing a nucleophilic attack on the C1' of the ribose to form the product. After dissociation, two additional enzymatic reactions on the tRNA convert PreQ1 to queuine (Q), resulting in the hypermodified nucleoside queuosine (7-(((4,5-cis-dihydroxy-2-cyclopenten-1-yl)amino)methyl)-7-deazaguanosine). The chain is Queuine tRNA-ribosyltransferase from Azotobacter vinelandii (strain DJ / ATCC BAA-1303).